Here is a 139-residue protein sequence, read N- to C-terminus: Acidic phospholipase A2 Tgc-E6 (139 aa).

Residues 1 to 16 (MRTLWIMAVLLLGVEG) form the signal peptide. Cystine bridges form between cysteine 42–cysteine 132, cysteine 44–cysteine 60, cysteine 59–cysteine 111, cysteine 65–cysteine 139, cysteine 66–cysteine 104, cysteine 73–cysteine 97, and cysteine 91–cysteine 102. Positions 43, 45, and 47 each coordinate Ca(2+). The active site involves histidine 63. Aspartate 64 is a binding site for Ca(2+). The active site involves aspartate 105.

The protein belongs to the phospholipase A2 family. Group II subfamily. D49 sub-subfamily. Monomer. Ca(2+) serves as cofactor. Expressed by the venom gland.

Its subcellular location is the secreted. The catalysed reaction is a 1,2-diacyl-sn-glycero-3-phosphocholine + H2O = a 1-acyl-sn-glycero-3-phosphocholine + a fatty acid + H(+). Its function is as follows. Snake venom phospholipase A2 (PLA2) that inhibits the ADP-(IC(50)=272 nM) and collagen-induced (IC(50)=518 nM) human platelet aggregation in platelet rich plasma. Exhibits very high hydrolytic activities toward the synthetic lecithin, and prefers the anionic micelles (dPPC with deoxycholate) to the zwitterionic micelles (dPPC with Triton X-100). PLA2 catalyzes the calcium-dependent hydrolysis of the 2-acyl groups in 3-sn-phosphoglycerides. The sequence is that of Acidic phospholipase A2 Tgc-E6 from Trimeresurus gracilis (Kikuchi habu).